The chain runs to 188 residues: Elongation factor P-like protein (188 aa).

Belongs to the elongation factor P family.

The polypeptide is Elongation factor P-like protein (Stenotrophomonas maltophilia (strain K279a)).